The sequence spans 434 residues: Trigger factor (434 aa).

Residues 160–245 (GDKVKMNFVG…LTEVQAAQLP (86 aa)) form the PPIase FKBP-type domain.

It belongs to the FKBP-type PPIase family. Tig subfamily.

The protein resides in the cytoplasm. The catalysed reaction is [protein]-peptidylproline (omega=180) = [protein]-peptidylproline (omega=0). Its function is as follows. Involved in protein export. Acts as a chaperone by maintaining the newly synthesized protein in an open conformation. Functions as a peptidyl-prolyl cis-trans isomerase. The polypeptide is Trigger factor (Shewanella denitrificans (strain OS217 / ATCC BAA-1090 / DSM 15013)).